Here is a 460-residue protein sequence, read N- to C-terminus: Ammonium transporter 1 member 3 (460 aa).

10 helical membrane-spanning segments follow: residues 15–37, 50–72, 98–117, 124–146, 166–188, 209–227, 255–277, 305–327, 337–356, and 377–399; these read AIYLLFSAYLVFVMQLGFAMLCA, LTNVVDAVVGSLSYYLFGFAFAF, FFLYQWAFAIAVAGITSGSI, TAYLVFSFFLTGFVYPVVAHWLW, IDFAGSGVVHLVGGIAGFWGSIV, NATLVVLGTLLLWFGWFGF, AVTTTLAGSTAGIVTLFGRRLLV, PWAAILCGFCAAWVLIGLNILAL, AAQLHGGCGAWGLIFTGLFA, and GLILGGGWGLFGAQIVELLSIVV.

Belongs to the ammonia transporter channel (TC 1.A.11.2) family. Leaves.

The protein resides in the membrane. In terms of biological role, ammonium transporter that may be involved in ammonium transport throughout the plant. In Solanum lycopersicum (Tomato), this protein is Ammonium transporter 1 member 3 (AMT1-3).